We begin with the raw amino-acid sequence, 347 residues long: NADH-quinone oxidoreductase subunit H (347 aa).

9 helical membrane passes run 13 to 33 (IIMI…IAYV), 50 to 70 (PNVV…KFVF), 82 to 102 (AVFL…WAVV), 115 to 135 (VGIL…IMGG), 161 to 181 (IGFV…TDIV), 198 to 218 (FLDW…ISAL), 263 to 283 (CSLT…IWIL), 286 to 306 (VPGI…FAMV), and 321 to 341 (LGWK…AFVL).

Belongs to the complex I subunit 1 family. As to quaternary structure, NDH-1 is composed of 14 different subunits. Subunits NuoA, H, J, K, L, M, N constitute the membrane sector of the complex.

It localises to the cell inner membrane. The enzyme catalyses a quinone + NADH + 5 H(+)(in) = a quinol + NAD(+) + 4 H(+)(out). Functionally, NDH-1 shuttles electrons from NADH, via FMN and iron-sulfur (Fe-S) centers, to quinones in the respiratory chain. The immediate electron acceptor for the enzyme in this species is believed to be ubiquinone. Couples the redox reaction to proton translocation (for every two electrons transferred, four hydrogen ions are translocated across the cytoplasmic membrane), and thus conserves the redox energy in a proton gradient. This subunit may bind ubiquinone. This chain is NADH-quinone oxidoreductase subunit H, found in Rhizobium leguminosarum bv. trifolii (strain WSM2304).